We begin with the raw amino-acid sequence, 35 residues long: MEALVYTFLLVSTLGILFFAIFFREPPRVTPKGGK.

Residues Ala3–Phe23 form a helical membrane-spanning segment.

Belongs to the PsbT family. As to quaternary structure, PSII is composed of 1 copy each of membrane proteins PsbA, PsbB, PsbC, PsbD, PsbE, PsbF, PsbH, PsbI, PsbJ, PsbK, PsbL, PsbM, PsbT, PsbY, PsbZ, Psb30/Ycf12, at least 3 peripheral proteins of the oxygen-evolving complex and a large number of cofactors. It forms dimeric complexes.

Its subcellular location is the plastid. The protein resides in the chloroplast thylakoid membrane. Functionally, found at the monomer-monomer interface of the photosystem II (PS II) dimer, plays a role in assembly and dimerization of PSII. PSII is a light-driven water plastoquinone oxidoreductase, using light energy to abstract electrons from H(2)O, generating a proton gradient subsequently used for ATP formation. This is Photosystem II reaction center protein T from Gnetum gnemon (Spanish joint-fir).